We begin with the raw amino-acid sequence, 272 residues long: 3-methyl-2-oxobutanoate hydroxymethyltransferase (272 aa).

Residues Asp-51 and Asp-90 each coordinate Mg(2+). 3-methyl-2-oxobutanoate is bound by residues Asp-51–Ser-52, Asp-90, and Lys-120. Residue Glu-122 coordinates Mg(2+). The active-site Proton acceptor is Glu-189.

It belongs to the PanB family. As to quaternary structure, homodecamer; pentamer of dimers. It depends on Mg(2+) as a cofactor.

It is found in the cytoplasm. The catalysed reaction is 3-methyl-2-oxobutanoate + (6R)-5,10-methylene-5,6,7,8-tetrahydrofolate + H2O = 2-dehydropantoate + (6S)-5,6,7,8-tetrahydrofolate. Its pathway is cofactor biosynthesis; (R)-pantothenate biosynthesis; (R)-pantoate from 3-methyl-2-oxobutanoate: step 1/2. Functionally, catalyzes the reversible reaction in which hydroxymethyl group from 5,10-methylenetetrahydrofolate is transferred onto alpha-ketoisovalerate to form ketopantoate. The protein is 3-methyl-2-oxobutanoate hydroxymethyltransferase of Syntrophus aciditrophicus (strain SB).